A 336-amino-acid polypeptide reads, in one-letter code: Dihydroorotate dehydrogenase (quinone) (336 aa).

Residues 62 to 66 (AGLDK) and Thr-86 contribute to the FMN site. Residue Lys-66 coordinates substrate. 111-115 (NRMGF) provides a ligand contact to substrate. FMN is bound by residues Asn-139 and Asn-172. Asn-172 lines the substrate pocket. Ser-175 (nucleophile) is an active-site residue. A substrate-binding site is contributed by Asn-177. Positions 217 and 245 each coordinate FMN. 246–247 (NT) is a binding site for substrate. FMN is bound by residues Gly-268, Gly-297, and 318 to 319 (YS).

The protein belongs to the dihydroorotate dehydrogenase family. Type 2 subfamily. As to quaternary structure, monomer. The cofactor is FMN.

Its subcellular location is the cell membrane. It carries out the reaction (S)-dihydroorotate + a quinone = orotate + a quinol. It participates in pyrimidine metabolism; UMP biosynthesis via de novo pathway; orotate from (S)-dihydroorotate (quinone route): step 1/1. Catalyzes the conversion of dihydroorotate to orotate with quinone as electron acceptor. In Yersinia pseudotuberculosis serotype O:1b (strain IP 31758), this protein is Dihydroorotate dehydrogenase (quinone).